The following is an 87-amino-acid chain: NAD(P)H-quinone oxidoreductase subunit O (87 aa).

The segment covering 1-10 (MSEQTGKVDD) has biased composition (basic and acidic residues). Residues 1–23 (MSEQTGKVDDSQSPPKVQKKLRK) are disordered.

Belongs to the complex I NdhO subunit family. As to quaternary structure, NDH-1 can be composed of about 15 different subunits; different subcomplexes with different compositions have been identified which probably have different functions.

The protein resides in the cellular thylakoid membrane. It carries out the reaction a plastoquinone + NADH + (n+1) H(+)(in) = a plastoquinol + NAD(+) + n H(+)(out). It catalyses the reaction a plastoquinone + NADPH + (n+1) H(+)(in) = a plastoquinol + NADP(+) + n H(+)(out). In terms of biological role, NDH-1 shuttles electrons from an unknown electron donor, via FMN and iron-sulfur (Fe-S) centers, to quinones in the respiratory and/or the photosynthetic chain. The immediate electron acceptor for the enzyme in this species is believed to be plastoquinone. Couples the redox reaction to proton translocation, and thus conserves the redox energy in a proton gradient. Cyanobacterial NDH-1 also plays a role in inorganic carbon-concentration. This is NAD(P)H-quinone oxidoreductase subunit O from Prochlorococcus marinus (strain NATL2A).